Reading from the N-terminus, the 702-residue chain is Polyribonucleotide nucleotidyltransferase (702 aa).

Positions 487 and 493 each coordinate Mg(2+). One can recognise a KH domain in the interval 554–613 (PRLLTIKIHPDKIREVIGKGGSTIQAITKETGTQIDIQDDGTIVIASVNAIAAQAAKARI). Residues 623-691 (GRIYEGKVAK…KQGRIRLSMK (69 aa)) enclose the S1 motif domain.

Belongs to the polyribonucleotide nucleotidyltransferase family. As to quaternary structure, component of the RNA degradosome, which is a multiprotein complex involved in RNA processing and mRNA degradation. It depends on Mg(2+) as a cofactor.

It is found in the cytoplasm. The enzyme catalyses RNA(n+1) + phosphate = RNA(n) + a ribonucleoside 5'-diphosphate. In terms of biological role, involved in mRNA degradation. Catalyzes the phosphorolysis of single-stranded polyribonucleotides processively in the 3'- to 5'-direction. The sequence is that of Polyribonucleotide nucleotidyltransferase from Stenotrophomonas maltophilia (strain R551-3).